The chain runs to 476 residues: Aspartyl/glutamyl-tRNA(Asn/Gln) amidotransferase subunit B (476 aa).

It belongs to the GatB/GatE family. GatB subfamily. Heterotrimer of A, B and C subunits.

The enzyme catalyses L-glutamyl-tRNA(Gln) + L-glutamine + ATP + H2O = L-glutaminyl-tRNA(Gln) + L-glutamate + ADP + phosphate + H(+). The catalysed reaction is L-aspartyl-tRNA(Asn) + L-glutamine + ATP + H2O = L-asparaginyl-tRNA(Asn) + L-glutamate + ADP + phosphate + 2 H(+). In terms of biological role, allows the formation of correctly charged Asn-tRNA(Asn) or Gln-tRNA(Gln) through the transamidation of misacylated Asp-tRNA(Asn) or Glu-tRNA(Gln) in organisms which lack either or both of asparaginyl-tRNA or glutaminyl-tRNA synthetases. The reaction takes place in the presence of glutamine and ATP through an activated phospho-Asp-tRNA(Asn) or phospho-Glu-tRNA(Gln). The sequence is that of Aspartyl/glutamyl-tRNA(Asn/Gln) amidotransferase subunit B from Albidiferax ferrireducens (strain ATCC BAA-621 / DSM 15236 / T118) (Rhodoferax ferrireducens).